The chain runs to 584 residues: Poly(A) RNA polymerase protein 2 (584 aa).

Over residues 1–11 (MGAKSVTASSS) the composition is skewed to polar residues. 2 disordered regions span residues 1-63 (MGAK…LPKD) and 81-147 (EGFD…QELE). The segment covering 12 to 35 (KKIKNRHNGKVKKSKKIKKVRKPQ) has biased composition (basic residues). Basic and acidic residues predominate over residues 53 to 63 (NEQETNKLPKD). Positions 130 to 139 (SEDEQAEQEE) are enriched in acidic residues. Residues aspartate 236 and aspartate 238 each contribute to the Mg(2+) site. The ATP site is built by glycine 301, lysine 326, asparagine 431, and arginine 435. Residues 371–431 (NLGVLLIEFF…AIQDPGDESN (61 aa)) enclose the PAP-associated domain. The segment at 525–584 (TSTATATTTDDDYEITNPPAKKAKIEEKPESEPAKRNSGETYITVSSEDDDEDGYNPYTL) is disordered. Positions 547 to 562 (AKIEEKPESEPAKRNS) are enriched in basic and acidic residues.

This sequence belongs to the DNA polymerase type-B-like family. In terms of assembly, component of the TRAMP complex (also called TRF4 complex) composed of at least HUL4, MTR4, PAP2/TRF4 and either AIR1 or AIR2. Interacts with NOP53 and POL2. Interacts directly with AIR2. The cofactor is Mg(2+). It depends on Mn(2+) as a cofactor.

It localises to the nucleus. The catalysed reaction is RNA(n) + ATP = RNA(n)-3'-adenine ribonucleotide + diphosphate. Catalytic subunit of the TRAMP complex which has a poly(A) RNA polymerase activity and is involved in a post-transcriptional quality control mechanism limiting inappropriate expression of genetic information. Polyadenylation is required for the degradative activity of the exosome on several of its nuclear RNA substrates like cryptic transcripts generated by RNA polymerase II and III, or hypomethylated pre-tRNAi-Met. Polyadenylates RNA processing and degradation intermediates of snRNAs, snoRNAs and mRNAs that accumulate in strains lacking a functional exosome. TRF4 is also required for proper nuclear division in mitosis, DNA damage repair and sister chromatid cohesion. Involved in the regulation of histone mRNA levels. May mediate mitotic chromosome condensation. This is Poly(A) RNA polymerase protein 2 (PAP2) from Saccharomyces cerevisiae (strain ATCC 204508 / S288c) (Baker's yeast).